The primary structure comprises 341 residues: Uroporphyrinogen decarboxylase (341 aa).

Residues 25-29, F44, D74, Y151, S206, and H318 contribute to the substrate site; that span reads RQAGR.

Belongs to the uroporphyrinogen decarboxylase family. As to quaternary structure, homodimer.

It localises to the cytoplasm. It catalyses the reaction uroporphyrinogen III + 4 H(+) = coproporphyrinogen III + 4 CO2. It functions in the pathway porphyrin-containing compound metabolism; protoporphyrin-IX biosynthesis; coproporphyrinogen-III from 5-aminolevulinate: step 4/4. Functionally, catalyzes the decarboxylation of four acetate groups of uroporphyrinogen-III to yield coproporphyrinogen-III. This is Uroporphyrinogen decarboxylase from Flavobacterium johnsoniae (strain ATCC 17061 / DSM 2064 / JCM 8514 / BCRC 14874 / CCUG 350202 / NBRC 14942 / NCIMB 11054 / UW101) (Cytophaga johnsonae).